Consider the following 483-residue polypeptide: Isocitrate dehydrogenase [NADP] (483 aa).

Threonine 74 contacts NADP(+). 5 residues coordinate D-threo-isocitrate: serine 83, asparagine 85, arginine 89, arginine 99, and arginine 121. Aspartate 232 is a binding site for Mg(2+). NADP(+) contacts are provided by residues 264–270 (HGSAPDI) and asparagine 277.

It belongs to the isocitrate and isopropylmalate dehydrogenases family. Homodimer. Requires Mg(2+) as cofactor. Mn(2+) serves as cofactor.

It carries out the reaction D-threo-isocitrate + NADP(+) = 2-oxoglutarate + CO2 + NADPH. Functionally, catalyzes the oxidative decarboxylation of isocitrate to 2-oxoglutarate and carbon dioxide with the concomitant reduction of NADP(+). The sequence is that of Isocitrate dehydrogenase [NADP] (icd) from Rickettsia typhi (strain ATCC VR-144 / Wilmington).